Consider the following 349-residue polypeptide: Protein-glutamate methylesterase/protein-glutamine glutaminase 2 (349 aa).

The Response regulatory domain maps to 4–121; that stretch reads SVLVVDDSAL…AEGMQAYAEE (118 aa). Aspartate 55 carries the post-translational modification 4-aspartylphosphate. One can recognise a CheB-type methylesterase domain in the interval 151 to 343; the sequence is LLSTEKIIAL…AALLQQAARR (193 aa). Residues serine 163, histidine 189, and aspartate 285 contribute to the active site.

It belongs to the CheB family. In terms of assembly, interacts with the C-terminal pentapeptide GWEEF of McpB. Phosphorylated by CheA. Phosphorylation of the N-terminal regulatory domain activates the methylesterase activity.

The protein localises to the cytoplasm. It carries out the reaction [protein]-L-glutamate 5-O-methyl ester + H2O = L-glutamyl-[protein] + methanol + H(+). The catalysed reaction is L-glutaminyl-[protein] + H2O = L-glutamyl-[protein] + NH4(+). In terms of biological role, involved in chemotaxis. Part of a chemotaxis signal transduction system that modulates chemotaxis in response to various stimuli. Catalyzes the demethylation of specific methylglutamate residues introduced into the chemoreceptors (methyl-accepting chemotaxis proteins or MCP) by CheR. Also mediates the irreversible deamidation of specific glutamine residues to glutamic acid. Acts on the methyl-accepting chemotaxis protein McpB. May be involved in a specific chemotactic response, which takes place during infection and is required for P.aeruginosa pathogenicity. This is Protein-glutamate methylesterase/protein-glutamine glutaminase 2 from Pseudomonas aeruginosa (strain ATCC 15692 / DSM 22644 / CIP 104116 / JCM 14847 / LMG 12228 / 1C / PRS 101 / PAO1).